Reading from the N-terminus, the 297-residue chain is MEPRALVTALSLGLSLCSLGLLVTAIFTDHWYETDPRRHKESCERSRAGADPPDQKNRLMPLSHLPLRDSPPLGRRLLPGGPGRADPESWRSLLGLGGLDAECGRPLFATYSGLWRKCYFLGIDRDIDTLILKGIAQRCTAIKYHFSQPIRLRNIPFNLTKTIQQDEWHLLHLRRITAGFLGMAVAVLLCGCIVATVSFFWEESLTQHVAGLLFLMTGIFCTISLCTYAASISYDLNRLPKLIYSLPADVEHGYSWSIFCAWCSLGFIVAAGGLCIAYPFISRTKIAQLKSGRDSTV.

Residues 1–25 (MEPRALVTALSLGLSLCSLGLLVTA) form the signal peptide. Over 26–179 (IFTDHWYETD…LLHLRRITAG (154 aa)) the chain is Extracellular. Over residues 41 to 57 (ESCERSRAGADPPDQKN) the composition is skewed to basic and acidic residues. Positions 41–84 (ESCERSRAGADPPDQKNRLMPLSHLPLRDSPPLGRRLLPGGPGR) are disordered. A compositionally biased stretch (low complexity) spans 68–79 (RDSPPLGRRLLP). A glycan (N-linked (GlcNAc...) asparagine) is linked at asparagine 158. A helical transmembrane segment spans residues 180–200 (FLGMAVAVLLCGCIVATVSFF). Residues 201–208 (WEESLTQH) lie on the Cytoplasmic side of the membrane. The chain crosses the membrane as a helical span at residues 209-229 (VAGLLFLMTGIFCTISLCTYA). Over 230–257 (ASISYDLNRLPKLIYSLPADVEHGYSWS) the chain is Extracellular. A helical membrane pass occupies residues 258-278 (IFCAWCSLGFIVAAGGLCIAY). At 279–297 (PFISRTKIAQLKSGRDSTV) the chain is on the cytoplasmic side.

It belongs to the TMEM178 family. As to quaternary structure, interacts with STIM1.

The protein resides in the endoplasmic reticulum membrane. Functionally, acts as a negative regulator of osteoclast differentiation in basal and inflammatory conditions by regulating TNFSF11-induced Ca (2+) fluxes, thereby controlling the induction of NFATC1. This Homo sapiens (Human) protein is Transmembrane protein 178A (TMEM178A).